The following is a 365-amino-acid chain: DNA replication and repair protein RecF (365 aa).

30 to 37 lines the ATP pocket; the sequence is GLNGSGKT.

This sequence belongs to the RecF family.

The protein localises to the cytoplasm. The RecF protein is involved in DNA metabolism; it is required for DNA replication and normal SOS inducibility. RecF binds preferentially to single-stranded, linear DNA. It also seems to bind ATP. The polypeptide is DNA replication and repair protein RecF (Cellvibrio japonicus (strain Ueda107) (Pseudomonas fluorescens subsp. cellulosa)).